A 166-amino-acid polypeptide reads, in one-letter code: Immunity protein RhsIB (166 aa).

Functionally, immunity component of a toxin-immunity protein module, which functions as a cellular contact-dependent growth inhibition (CDI) system. Specifically inhibits its cognate toxin RhsB. Cell contact is necessary for growth inhibition. In Dickeya dadantii (strain 3937) (Erwinia chrysanthemi (strain 3937)), this protein is Immunity protein RhsIB (rhsIB).